A 194-amino-acid polypeptide reads, in one-letter code: dCTP deaminase (194 aa).

DCTP-binding positions include 110 to 115 (RSSLAR), Asp-128, 136 to 138 (VLE), Tyr-171, Lys-178, and Gln-182. Glu-138 (proton donor/acceptor) is an active-site residue.

The protein belongs to the dCTP deaminase family. In terms of assembly, homotrimer.

The enzyme catalyses dCTP + H2O + H(+) = dUTP + NH4(+). Its pathway is pyrimidine metabolism; dUMP biosynthesis; dUMP from dCTP (dUTP route): step 1/2. In terms of biological role, catalyzes the deamination of dCTP to dUTP. This Glaesserella parasuis serovar 5 (strain SH0165) (Haemophilus parasuis) protein is dCTP deaminase.